The primary structure comprises 465 residues: Putative ABC transporter ATP-binding protein MG065 homolog (465 aa).

The ABC transporter domain occupies 232-465 (IELKNVYKYI…PKQVEDINWI (234 aa)). 268–275 (GPSGSGKT) lines the ATP pocket.

It belongs to the ABC transporter superfamily.

In Mycoplasma pneumoniae (strain ATCC 29342 / M129 / Subtype 1) (Mycoplasmoides pneumoniae), this protein is Putative ABC transporter ATP-binding protein MG065 homolog.